We begin with the raw amino-acid sequence, 270 residues long: Homeobox protein vent1B (270 aa).

2 stretches are compositionally biased toward basic and acidic residues: residues 17–26 (EEAADGKDSM) and 44–59 (YAKE…DVQE). 2 disordered regions span residues 17–66 (EEAA…SFQC) and 88–134 (TWGS…LRTA). Residues 89–99 (WGSSDEFSSAG) are compositionally biased toward polar residues. Basic and acidic residues predominate over residues 116-131 (QDTDHNGKSTKSDRRL). The homeobox DNA-binding region spans 128 to 187 (DRRLRTAFSPQQISKLEQAFNKQRYLGASERKKLATSLMLSEIQVKTWFQNRRMKLKRQI).

In terms of tissue distribution, expressed in the ventral marginal zone of gastrulae. At the end of gastrulation, predominantly localized to the ventral region of the closing slit blastopore. At early tail bud stage, expression is maintained only in the forming proctodeum.

The protein localises to the nucleus. Functionally, probable transcription regulator. Acts in a ventral signaling pathway downstream of bmp4 and vent2B. The polypeptide is Homeobox protein vent1B (vent1B) (Xenopus laevis (African clawed frog)).